Consider the following 171-residue polypeptide: 3-hydroxydecanoyl-[acyl-carrier-protein] dehydratase (171 aa).

His71 is a catalytic residue.

It belongs to the thioester dehydratase family. FabA subfamily. In terms of assembly, homodimer.

Its subcellular location is the cytoplasm. It catalyses the reaction a (3R)-hydroxyacyl-[ACP] = a (2E)-enoyl-[ACP] + H2O. The enzyme catalyses (3R)-hydroxydecanoyl-[ACP] = (2E)-decenoyl-[ACP] + H2O. It carries out the reaction (2E)-decenoyl-[ACP] = (3Z)-decenoyl-[ACP]. It functions in the pathway lipid metabolism; fatty acid biosynthesis. Necessary for the introduction of cis unsaturation into fatty acids. Catalyzes the dehydration of (3R)-3-hydroxydecanoyl-ACP to E-(2)-decenoyl-ACP and then its isomerization to Z-(3)-decenoyl-ACP. Can catalyze the dehydratase reaction for beta-hydroxyacyl-ACPs with saturated chain lengths up to 16:0, being most active on intermediate chain length. The sequence is that of 3-hydroxydecanoyl-[acyl-carrier-protein] dehydratase from Rhizobium rhizogenes (strain K84 / ATCC BAA-868) (Agrobacterium radiobacter).